Here is a 390-residue protein sequence, read N- to C-terminus: Guanine nucleotide-binding protein alpha-7 subunit (390 aa).

2 stretches are compositionally biased toward low complexity: residues 1–12 (MSSTTTNTTTAT) and 22–42 (SSSPQSPSSSTSTLSPPMSPS). Residues 1–42 (MSSTTTNTTTATPAIQVNGNQSSSPQSPSSSTSTLSPPMSPS) form a disordered region. In terms of domain architecture, G-alpha spans 70–390 (SELKLLLLGT…TRQTMEEGGI (321 aa)). Positions 73–86 (KLLLLGTGDSGKST) are G1 motif. Residues 78 to 85 (GTGDSGKS), 213 to 219 (LYTRVAS), 238 to 242 (DVAGQ), 307 to 310 (NKRD), and Ala-363 contribute to the GTP site. Ser-85 serves as a coordination point for Mg(2+). The segment at 211–219 (DILYTRVAS) is G2 motif. The tract at residues 234 to 243 (FRMIDVAGQR) is G3 motif. A G4 motif region spans residues 303–310 (ILFLNKRD). The tract at residues 361–366 (TTATDT) is G5 motif.

This sequence belongs to the G-alpha family. As to quaternary structure, g proteins are composed of 3 units; alpha, beta and gamma. The alpha chain contains the guanine nucleotide binding site.

Guanine nucleotide-binding proteins (G proteins) are involved as modulators or transducers in various transmembrane signaling systems. This Dictyostelium discoideum (Social amoeba) protein is Guanine nucleotide-binding protein alpha-7 subunit (gpaG).